Here is a 77-residue protein sequence, read N- to C-terminus: Acyl carrier protein (77 aa).

In terms of domain architecture, Carrier spans 2 to 77 (ADTLERVTKI…DAVNYIQNQQ (76 aa)). Position 37 is an O-(pantetheine 4'-phosphoryl)serine (Ser-37).

It belongs to the acyl carrier protein (ACP) family. 4'-phosphopantetheine is transferred from CoA to a specific serine of apo-ACP by AcpS. This modification is essential for activity because fatty acids are bound in thioester linkage to the sulfhydryl of the prosthetic group.

The protein localises to the cytoplasm. It participates in lipid metabolism; fatty acid biosynthesis. Carrier of the growing fatty acid chain in fatty acid biosynthesis. This chain is Acyl carrier protein (acpA), found in Bacillus subtilis (strain 168).